The primary structure comprises 790 residues: Endonuclease MutS2 (790 aa).

ATP is bound at residue 334–341 (GPNTGGKT). A Smr domain is found at 713–788 (LDVRGMTLDD…GDGVTIVELH (76 aa)).

This sequence belongs to the DNA mismatch repair MutS family. MutS2 subfamily. Homodimer. Binds to stalled ribosomes, contacting rRNA.

Endonuclease that is involved in the suppression of homologous recombination and thus may have a key role in the control of bacterial genetic diversity. Its function is as follows. Acts as a ribosome collision sensor, splitting the ribosome into its 2 subunits. Detects stalled/collided 70S ribosomes which it binds and splits by an ATP-hydrolysis driven conformational change. Acts upstream of the ribosome quality control system (RQC), a ribosome-associated complex that mediates the extraction of incompletely synthesized nascent chains from stalled ribosomes and their subsequent degradation. Probably generates substrates for RQC. This Caldanaerobacter subterraneus subsp. tengcongensis (strain DSM 15242 / JCM 11007 / NBRC 100824 / MB4) (Thermoanaerobacter tengcongensis) protein is Endonuclease MutS2.